Reading from the N-terminus, the 362-residue chain is C-C chemokine receptor type 10 (362 aa).

The Extracellular segment spans residues 1-48 (MGTKPTEQVSWGLYSGYDEEAYSVGPLPELCYKADVQAFSRAFQPSVS). The chain crosses the membrane as a helical span at residues 49–69 (LMVAVLGLAGNGLVLATHLAA). At 70-80 (RRTTRSPTSVH) the chain is on the cytoplasmic side. The helical transmembrane segment at 81–101 (LLQLALADLLLALTLPFAAAG) threads the bilayer. Residues 102 to 115 (ALQGWNLGSTTCRA) lie on the Extracellular side of the membrane. A disulfide bridge connects residues cysteine 113 and cysteine 191. The helical transmembrane segment at 116–136 (ISGLYSASFHAGFLFLACISA) threads the bilayer. Topologically, residues 137 to 159 (DRYVAIARALPAGQRPSTPSRAH) are cytoplasmic. A helical transmembrane segment spans residues 160 to 180 (LVSVFVWLLSLFLALPALLFS). Topologically, residues 181–208 (RDGPREGQRRCRLIFPESLTQTVKGASA) are extracellular. The chain crosses the membrane as a helical span at residues 209-229 (VAQVVLGFALPLGVMAACYAL). Topologically, residues 230-247 (LGRTLLAARGPERRRALR) are cytoplasmic. Residues 248–268 (VVVALVVAFVVLQLPYSLALL) traverse the membrane as a helical segment. Residues 269–291 (LDTADLLAARERSCSSSKRKDLA) are Extracellular-facing. A helical transmembrane segment spans residues 292-312 (LLVTGGLTLVRCSLNPVLYAF). Over 313–362 (LGLRFRRDLRRLLQGGGCSPKPNPRGRCPRRLRLSSCSAPTETHSLSWDN) the chain is Cytoplasmic.

It belongs to the G-protein coupled receptor 1 family. In terms of tissue distribution, expressed at high levels in small intestine, colon, lymph nodes, Peyer patches and at lower levels in thymus, lung and spleen.

It is found in the cell membrane. In terms of biological role, receptor for chemokines SCYA27 and SCYA28. Subsequently transduces a signal by increasing the intracellular calcium ions level. The polypeptide is C-C chemokine receptor type 10 (Ccr10) (Mus musculus (Mouse)).